The primary structure comprises 260 residues: NAD-capped RNA hydrolase NudC (260 aa).

Substrate is bound by residues K25 and R69. Residues C98 and C101 each contribute to the Zn(2+) site. E111 contributes to the substrate binding site. The Zn(2+) site is built by C116 and C119. Y124 serves as a coordination point for substrate. Residues 125-248 (PQIAPCVIVA…TVARRLIEDT (124 aa)) enclose the Nudix hydrolase domain. The a divalent metal cation site is built by A158, E174, and E178. The Nudix box signature appears at 159–180 (GFVEVGETLEQAVSREVLEESN). 192–199 (QPWPFPHS) is a binding site for substrate. E219 is an a divalent metal cation binding site. Position 241 (A241) interacts with substrate.

The protein belongs to the Nudix hydrolase family. NudC subfamily. Homodimer. Mg(2+) serves as cofactor. Requires Mn(2+) as cofactor. It depends on Zn(2+) as a cofactor.

It carries out the reaction a 5'-end NAD(+)-phospho-ribonucleoside in mRNA + H2O = a 5'-end phospho-adenosine-phospho-ribonucleoside in mRNA + beta-nicotinamide D-ribonucleotide + 2 H(+). It catalyses the reaction NAD(+) + H2O = beta-nicotinamide D-ribonucleotide + AMP + 2 H(+). The enzyme catalyses NADH + H2O = reduced beta-nicotinamide D-ribonucleotide + AMP + 2 H(+). In terms of biological role, mRNA decapping enzyme that specifically removes the nicotinamide adenine dinucleotide (NAD) cap from a subset of mRNAs by hydrolyzing the diphosphate linkage to produce nicotinamide mononucleotide (NMN) and 5' monophosphate mRNA. The NAD-cap is present at the 5'-end of some mRNAs and stabilizes RNA against 5'-processing. Has preference for mRNAs with a 5'-end purine. Catalyzes the hydrolysis of a broad range of dinucleotide pyrophosphates. The protein is NAD-capped RNA hydrolase NudC of Yersinia pseudotuberculosis serotype O:1b (strain IP 31758).